A 632-amino-acid polypeptide reads, in one-letter code: Bifunctional protein GlmU (632 aa).

Residues 1-229 are pyrophosphorylase; it reads MAERELSVAI…PQEIVGVNDR (229 aa). Residues 11 to 14, Lys-25, Gln-76, and 81 to 82 each bind UDP-N-acetyl-alpha-D-glucosamine; these read LAAG and GT. Asp-106 is a Mg(2+) binding site. Positions 143, 158, 173, and 227 each coordinate UDP-N-acetyl-alpha-D-glucosamine. Asn-227 provides a ligand contact to Mg(2+). The linker stretch occupies residues 230–250; it reads RQLAQAYQILQDRLKEAWMEA. Positions 251–632 are N-acetyltransferase; that stretch reads GVTFVDPDSS…ADNSRPKSLQ (382 aa). UDP-N-acetyl-alpha-D-glucosamine is bound by residues Arg-332 and Lys-350. His-362 serves as the catalytic Proton acceptor. The UDP-N-acetyl-alpha-D-glucosamine site is built by Tyr-365 and Asn-376. Acetyl-CoA is bound by residues Ala-379, 385–386, Ala-422, and Arg-441; that span reads NY. The tract at residues 600–632 is disordered; that stretch reads VAGDPCWPSPPPQPQQNQQTKPEADNSRPKSLQ. Residues 621-632 are compositionally biased toward basic and acidic residues; that stretch reads PEADNSRPKSLQ.

In the N-terminal section; belongs to the N-acetylglucosamine-1-phosphate uridyltransferase family. It in the C-terminal section; belongs to the transferase hexapeptide repeat family. Homotrimer. Mg(2+) serves as cofactor.

The protein resides in the cytoplasm. The enzyme catalyses alpha-D-glucosamine 1-phosphate + acetyl-CoA = N-acetyl-alpha-D-glucosamine 1-phosphate + CoA + H(+). It catalyses the reaction N-acetyl-alpha-D-glucosamine 1-phosphate + UTP + H(+) = UDP-N-acetyl-alpha-D-glucosamine + diphosphate. It functions in the pathway nucleotide-sugar biosynthesis; UDP-N-acetyl-alpha-D-glucosamine biosynthesis; N-acetyl-alpha-D-glucosamine 1-phosphate from alpha-D-glucosamine 6-phosphate (route II): step 2/2. It participates in nucleotide-sugar biosynthesis; UDP-N-acetyl-alpha-D-glucosamine biosynthesis; UDP-N-acetyl-alpha-D-glucosamine from N-acetyl-alpha-D-glucosamine 1-phosphate: step 1/1. The protein operates within bacterial outer membrane biogenesis; LPS lipid A biosynthesis. Functionally, catalyzes the last two sequential reactions in the de novo biosynthetic pathway for UDP-N-acetylglucosamine (UDP-GlcNAc). The C-terminal domain catalyzes the transfer of acetyl group from acetyl coenzyme A to glucosamine-1-phosphate (GlcN-1-P) to produce N-acetylglucosamine-1-phosphate (GlcNAc-1-P), which is converted into UDP-GlcNAc by the transfer of uridine 5-monophosphate (from uridine 5-triphosphate), a reaction catalyzed by the N-terminal domain. This Synechococcus sp. (strain JA-2-3B'a(2-13)) (Cyanobacteria bacterium Yellowstone B-Prime) protein is Bifunctional protein GlmU.